The sequence spans 400 residues: Enoyl-[acyl-carrier-protein] reductase [NADH] (400 aa).

NAD(+)-binding positions include 48–53, 74–75, 111–112, and 139–140; these read GSSSGY, FE, DA, and LA. Tyr225 is a binding site for substrate. Tyr235 functions as the Proton donor in the catalytic mechanism. NAD(+)-binding positions include Lys244 and 273–275; that span reads VVT.

This sequence belongs to the TER reductase family. Monomer.

It carries out the reaction a 2,3-saturated acyl-[ACP] + NAD(+) = a (2E)-enoyl-[ACP] + NADH + H(+). Its pathway is lipid metabolism; fatty acid biosynthesis. Involved in the final reduction of the elongation cycle of fatty acid synthesis (FAS II). Catalyzes the reduction of a carbon-carbon double bond in an enoyl moiety that is covalently linked to an acyl carrier protein (ACP). The chain is Enoyl-[acyl-carrier-protein] reductase [NADH] from Shewanella baltica (strain OS223).